The chain runs to 315 residues: METSSKGLLTQVTQFWNLLDDLAQSDPEGYEKFIQQQLKEGKQLCAAPEPQLCLQTRILKPKEKILFINLCQWTRIPAPQSTTHPVPLTVGKPEDTTEISDAYTVIDVAYNPDVLHAAEKDQVKKNQLIQMAMKCIEEKFQFTLSHSYHITKFRIKGSIQRMKQNLMGIQTDSIDLREKMRRELTLGQIRSSTMSNPDHFPQLLLPKDQVSGKAVCLIEEISSTEIQVEMKMPAYELKIVHDHSEKPLKIELKVELPGINSVSLCDLSVSEDDLLIEVSEKYRLHLNLPKLIDTEMTTAKFIKEKSTLIITMPLV.

This sequence belongs to the PIH1 family.

In Homo sapiens (Human), this protein is PIH1 domain-containing protein 2 (PIH1D2).